Here is a 330-residue protein sequence, read N- to C-terminus: Lipoyl synthase (330 aa).

Positions 77, 82, 88, 103, 107, 110, and 317 each coordinate [4Fe-4S] cluster. A Radical SAM core domain is found at 89 to 306 (FNHGTATFMI…RSEAEKMGFE (218 aa)).

The protein belongs to the radical SAM superfamily. Lipoyl synthase family. The cofactor is [4Fe-4S] cluster.

It is found in the cytoplasm. It carries out the reaction [[Fe-S] cluster scaffold protein carrying a second [4Fe-4S](2+) cluster] + N(6)-octanoyl-L-lysyl-[protein] + 2 oxidized [2Fe-2S]-[ferredoxin] + 2 S-adenosyl-L-methionine + 4 H(+) = [[Fe-S] cluster scaffold protein] + N(6)-[(R)-dihydrolipoyl]-L-lysyl-[protein] + 4 Fe(3+) + 2 hydrogen sulfide + 2 5'-deoxyadenosine + 2 L-methionine + 2 reduced [2Fe-2S]-[ferredoxin]. It participates in protein modification; protein lipoylation via endogenous pathway; protein N(6)-(lipoyl)lysine from octanoyl-[acyl-carrier-protein]: step 2/2. Catalyzes the radical-mediated insertion of two sulfur atoms into the C-6 and C-8 positions of the octanoyl moiety bound to the lipoyl domains of lipoate-dependent enzymes, thereby converting the octanoylated domains into lipoylated derivatives. The sequence is that of Lipoyl synthase from Haemophilus ducreyi (strain 35000HP / ATCC 700724).